An 841-amino-acid polypeptide reads, in one-letter code: Outer membrane usher protein MyfC (841 aa).

The first 26 residues, 1 to 26 (MFFSLKNSVAKLIAFWAICLVLPVWA), serve as a signal peptide directing secretion. A disulfide bridge connects residues Cys817 and Cys840.

It belongs to the fimbrial export usher family.

It is found in the cell outer membrane. Involved in the export and assembly of the MyfA fimbrial subunit. The sequence is that of Outer membrane usher protein MyfC (myfC) from Yersinia enterocolitica.